Here is a 444-residue protein sequence, read N- to C-terminus: Transcription factor PIF5 (444 aa).

An involved in interaction with phyB region spans residues 26–39 (EDELVELLWRDGQV). Disordered regions lie at residues 154 to 265 (HCGS…NLSE) and 416 to 444 (MLGF…GKIG). Over residues 155 to 171 (CGSNQSTNIHQATTLPV) the composition is skewed to polar residues. Residues 175 to 185 (DRSKNVEERLD) show a composition bias toward basic and acidic residues. The span at 187–197 (SSGGSSGCSYG) shows a compositional bias: low complexity. The span at 224 to 244 (ESVSQSDIGLTSTDDQTMGNK) shows a compositional bias: polar residues. The segment covering 256–265 (RAAEVHNLSE) has biased composition (basic and acidic residues). In terms of domain architecture, bHLH spans 256–305 (RAAEVHNLSERRRRDRINERMKALQELIPHCSRTDKASILDEAIDYLKSL). A compositionally biased stretch (polar residues) spans 424-437 (GPQSQLSAPATTDS). Serine 437 carries the phosphoserine modification.

As to quaternary structure, homodimer. Interacts specifically with the Pfr form of phytochrome B and with TOC1/APRR1. May form a heterodimer with PIF3. Interacts with PHYB, CRY1 and CRY2 in the nucleus in response to low blue light (LBL). Interacts with TOPP4. Associates to PTAC12/HMR/PAP5 which acts as a transcriptional coactivator. In terms of processing, phosphorylated. Additional phosphorylations induced within 60 seconds following phytochrome B photoactivation. Dephosphorylated by TOPP4 during photomorphogenesis, leading to subsequent degradation of PIF5 by the proteasomal pathway. In terms of tissue distribution, mainly expressed in leaves and seedlings, and, to a lower extent, in stems, fruits, flowers and roots.

It is found in the nucleus. In terms of biological role, transcription factor acting negatively in the phytochrome B signaling pathway to promote the shade-avoidance response. Regulates PHYB abundance at the post-transcriptional level, possibly via the ubiquitin-proteasome pathway. Promotes ethylene activity in the dark. May regulate the expression of a subset of genes by binding to the G-box motif. Might be involved in the integration of light-signals to control both circadian and photomorphogenic processes. Activated by CRY1 and CRY2 in response to low blue light (LBL) by direct binding at chromatin on E-box variant 5'-CA[CT]GTG-3' to stimulate specific gene expression to adapt global physiology (e.g. hypocotyl elongation in low blue light). This Arabidopsis thaliana (Mouse-ear cress) protein is Transcription factor PIF5.